The sequence spans 173 residues: Large ribosomal subunit protein bL9 (173 aa).

A disordered region spans residues 150 to 173; the sequence is KQEDKKSLSKKLNKADEQGERAEV.

The protein belongs to the bacterial ribosomal protein bL9 family.

Binds to the 23S rRNA. The polypeptide is Large ribosomal subunit protein bL9 (Borreliella burgdorferi (strain ZS7) (Borrelia burgdorferi)).